We begin with the raw amino-acid sequence, 408 residues long: Bifunctional enzyme IspD/IspF (408 aa).

Positions 1 to 247 (MNAPFEKDRR…GPAMTELPDI (247 aa)) are 2-C-methyl-D-erythritol 4-phosphate cytidylyltransferase. Positions 248–408 (RVGNGYDVHG…TVAYPGSLGN (161 aa)) are 2-C-methyl-D-erythritol 2,4-cyclodiphosphate synthase. 2 residues coordinate a divalent metal cation: D254 and H256. Residues 254–256 (DVH) and 280–281 (HS) contribute to the 4-CDP-2-C-methyl-D-erythritol 2-phosphate site. H288 is an a divalent metal cation binding site. 4-CDP-2-C-methyl-D-erythritol 2-phosphate is bound by residues 302–304 (DIG), 378–381 (TTNE), F385, and R388.

The protein in the N-terminal section; belongs to the IspD/TarI cytidylyltransferase family. IspD subfamily. It in the C-terminal section; belongs to the IspF family. Requires a divalent metal cation as cofactor.

The catalysed reaction is 2-C-methyl-D-erythritol 4-phosphate + CTP + H(+) = 4-CDP-2-C-methyl-D-erythritol + diphosphate. It catalyses the reaction 4-CDP-2-C-methyl-D-erythritol 2-phosphate = 2-C-methyl-D-erythritol 2,4-cyclic diphosphate + CMP. Its pathway is isoprenoid biosynthesis; isopentenyl diphosphate biosynthesis via DXP pathway; isopentenyl diphosphate from 1-deoxy-D-xylulose 5-phosphate: step 2/6. The protein operates within isoprenoid biosynthesis; isopentenyl diphosphate biosynthesis via DXP pathway; isopentenyl diphosphate from 1-deoxy-D-xylulose 5-phosphate: step 4/6. Its function is as follows. Bifunctional enzyme that catalyzes the formation of 4-diphosphocytidyl-2-C-methyl-D-erythritol from CTP and 2-C-methyl-D-erythritol 4-phosphate (MEP) (IspD), and catalyzes the conversion of 4-diphosphocytidyl-2-C-methyl-D-erythritol 2-phosphate (CDP-ME2P) to 2-C-methyl-D-erythritol 2,4-cyclodiphosphate (ME-CPP) with a corresponding release of cytidine 5-monophosphate (CMP) (IspF). The polypeptide is Bifunctional enzyme IspD/IspF (Chelativorans sp. (strain BNC1)).